The following is a 126-amino-acid chain: Small ribosomal subunit protein uS13 (126 aa).

Residues 91–126 are disordered; that stretch reads HRAGLPVRGQRTRTNSRTRRSAKRTVAGKKKAPSKK. Residues 100-126 show a composition bias toward basic residues; the sequence is QRTRTNSRTRRSAKRTVAGKKKAPSKK.

It belongs to the universal ribosomal protein uS13 family. As to quaternary structure, part of the 30S ribosomal subunit. Forms a loose heterodimer with protein S19. Forms two bridges to the 50S subunit in the 70S ribosome.

In terms of biological role, located at the top of the head of the 30S subunit, it contacts several helices of the 16S rRNA. In the 70S ribosome it contacts the 23S rRNA (bridge B1a) and protein L5 of the 50S subunit (bridge B1b), connecting the 2 subunits; these bridges are implicated in subunit movement. Contacts the tRNAs in the A and P-sites. The polypeptide is Small ribosomal subunit protein uS13 (Acaryochloris marina (strain MBIC 11017)).